The sequence spans 103 residues: MANQRIRIRLKSFDHRLIDQSAQEIVDTAKRTGAQVCGPVPLPTRIERFNVLTSPHVNKDARDQYEIRTHKRMLDIVQPTDKTVDALMKLDLAAGVDVQIALG.

The protein belongs to the universal ribosomal protein uS10 family. Part of the 30S ribosomal subunit.

Involved in the binding of tRNA to the ribosomes. The chain is Small ribosomal subunit protein uS10 from Psychrobacter sp. (strain PRwf-1).